A 314-amino-acid polypeptide reads, in one-letter code: Hydroxyethylthiazole kinase (314 aa).

The segment covering 1–13 (MSNSASSFADVSS) has biased composition (low complexity). The segment at 1–24 (MSNSASSFADVSSGCTAGTPVPAD) is disordered. Substrate is bound at residue M70. The ATP site is built by R145 and S217. G244 is a substrate binding site.

The protein belongs to the Thz kinase family. Requires Mg(2+) as cofactor.

The catalysed reaction is 5-(2-hydroxyethyl)-4-methylthiazole + ATP = 4-methyl-5-(2-phosphooxyethyl)-thiazole + ADP + H(+). The protein operates within cofactor biosynthesis; thiamine diphosphate biosynthesis; 4-methyl-5-(2-phosphoethyl)-thiazole from 5-(2-hydroxyethyl)-4-methylthiazole: step 1/1. Functionally, catalyzes the phosphorylation of the hydroxyl group of 4-methyl-5-beta-hydroxyethylthiazole (THZ). This is Hydroxyethylthiazole kinase from Bifidobacterium longum subsp. infantis (strain ATCC 15697 / DSM 20088 / JCM 1222 / NCTC 11817 / S12).